The following is a 221-amino-acid chain: Histidine biosynthesis bifunctional protein HisIE (221 aa).

The segment at 1-129 (MAYSKNFSIE…AKKTSPFSNI (129 aa)) is phosphoribosyl-AMP cyclohydrolase. A phosphoribosyl-ATP pyrophosphohydrolase region spans residues 130 to 221 (CSELFDTLHE…VLESRRGKNN (92 aa)).

It in the N-terminal section; belongs to the PRA-CH family. In the C-terminal section; belongs to the PRA-PH family.

It is found in the cytoplasm. It catalyses the reaction 1-(5-phospho-beta-D-ribosyl)-ATP + H2O = 1-(5-phospho-beta-D-ribosyl)-5'-AMP + diphosphate + H(+). It carries out the reaction 1-(5-phospho-beta-D-ribosyl)-5'-AMP + H2O = 1-(5-phospho-beta-D-ribosyl)-5-[(5-phospho-beta-D-ribosylamino)methylideneamino]imidazole-4-carboxamide. The protein operates within amino-acid biosynthesis; L-histidine biosynthesis; L-histidine from 5-phospho-alpha-D-ribose 1-diphosphate: step 2/9. It participates in amino-acid biosynthesis; L-histidine biosynthesis; L-histidine from 5-phospho-alpha-D-ribose 1-diphosphate: step 3/9. The sequence is that of Histidine biosynthesis bifunctional protein HisIE from Prochlorococcus marinus subsp. pastoris (strain CCMP1986 / NIES-2087 / MED4).